Here is a 577-residue protein sequence, read N- to C-terminus: MNIQALLSEKVSQALIAAGAPADCEPQVRQSAKAQFGDYQANGVMAIAKKLGMPPRQFAEQALAHLDLTGIAAKTEIAGPGFINIFLDPAFLAKNIEAAVASDRAGVEKVSAPQTIVVDYSAPNVAKEMHVGHVRSTIIGDASVRTLEFLGHKVIRANHVGDWGTQFGMLIAYLEKQQQENAGEMALSDLEGFYREAKKHYDEDEAFAERARSYVVKLQGGDEYCREMWRKLVDITMTQNQITYQRLNVTLTRDDVMGESLYNPMLPGIVADLKAKGLAVESEGATVVFLDEFKNKEGEPMGVIIQKKDGGYLYTTTDIACAKYRYETLHADRVLYYIDSRQHQHLMQAWTIVRKAGYVPESVPLEHHMFGMMLGKDGKPFKTRAGGTIKLSELLDEALDRARRLVAGKNPDMPADELEKLANAVGIGAVKYADLSKSRTTDYIFDWDNMLAFEGNTAPYMQYAYTRVLSVFRKAGVKESELTAPVVIQDDREAQLAARLLQFEETLGVVARDGTPHVMCAYLYDLAGLFSGFYEHCPILTAETDALRQSRLKLALLTAKTLKLGLDTLGIETVERM.

A 'HIGH' region motif is present at residues P123–H133.

Belongs to the class-I aminoacyl-tRNA synthetase family. Monomer.

The protein resides in the cytoplasm. It carries out the reaction tRNA(Arg) + L-arginine + ATP = L-arginyl-tRNA(Arg) + AMP + diphosphate. This is Arginine--tRNA ligase from Cronobacter sakazakii (strain ATCC BAA-894) (Enterobacter sakazakii).